Reading from the N-terminus, the 419-residue chain is Ribosome biogenesis protein WDR12 homolog (419 aa).

Positions 10-91 (VQVHLKTKQE…EDAIEIEYVE (82 aa)) are ubiquitin-like (UBL) domain. WD repeat units follow at residues 103–141 (LHDD…LTIP), 142–184 (GHTA…NTVE), 191–230 (GHER…AGEG), 249–287 (GHRE…IKAE), 289–328 (STNK…GSVV), 334–374 (GHNA…APLY), and 378–416 (GHGE…VENM).

It belongs to the WD repeat WDR12/YTM1 family.

The protein resides in the nucleus. The protein localises to the nucleolus. It is found in the nucleoplasm. Functionally, required for maturation of ribosomal RNAs and formation of the large ribosomal subunit. This is Ribosome biogenesis protein WDR12 homolog from Drosophila pseudoobscura pseudoobscura (Fruit fly).